A 423-amino-acid polypeptide reads, in one-letter code: SH2 domain-containing protein 5 (423 aa).

Residues 28 to 146 (AQYVGSFPVD…LLCRSFQLAY (119 aa)) enclose the PID domain. Residues 296-392 (WAFAGISRPC…LDMGRLNPTY (97 aa)) enclose the SH2 domain. A disordered region spans residues 392-423 (YEEQDCGPPGRPPRTLRPLSHAKSEAELQGLG).

In terms of assembly, interacts with BCR.

The protein localises to the postsynaptic density. May be involved in synaptic plasticity regulation through the control of Rac-GTP levels. In Homo sapiens (Human), this protein is SH2 domain-containing protein 5.